The sequence spans 543 residues: Oligopeptide-binding protein AppA (543 aa).

The first 23 residues, 1-23, serve as a signal peptide directing secretion; that stretch reads MKRRKTALMMLSVLMVLAIFLSA. The N-palmitoyl cysteine moiety is linked to residue Cys24. A lipid anchor (S-diacylglycerol cysteine) is attached at Cys24.

It belongs to the bacterial solute-binding protein 5 family.

It is found in the cell membrane. This protein is a component of an oligopeptide permease, a binding protein-dependent transport system. This APP system can completely substitute for the OPP system in both sporulation and genetic competence. AppA can bind and transport tetra- and pentapeptides but not tripeptides. This chain is Oligopeptide-binding protein AppA (appA), found in Bacillus subtilis (strain 168).